Consider the following 262-residue polypeptide: Regulatory protein RecX (262 aa).

The protein belongs to the RecX family.

It is found in the cytoplasm. Its function is as follows. Modulates RecA activity. The sequence is that of Regulatory protein RecX from Photobacterium profundum (strain SS9).